The following is a 453-amino-acid chain: Bifunctional protein GlmU (453 aa).

Residues 1-225 are pyrophosphorylase; it reads MNIVILAAGT…EWETLGVNSK (225 aa). Residues 6–9, lysine 20, glutamine 71, 76–77, 98–100, glycine 135, glutamate 150, asparagine 165, and asparagine 223 each bind UDP-N-acetyl-alpha-D-glucosamine; these read LAAG, GT, and YGD. Aspartate 100 contacts Mg(2+). Asparagine 223 contributes to the Mg(2+) binding site. The interval 226 to 246 is linker; sequence AQLAELERIHQRNVADALLVD. The N-acetyltransferase stretch occupies residues 247–453; that stretch reads GVTLADPARV…GYVRPVKKKS (207 aa). UDP-N-acetyl-alpha-D-glucosamine contacts are provided by arginine 329 and lysine 347. Histidine 359 (proton acceptor) is an active-site residue. UDP-N-acetyl-alpha-D-glucosamine contacts are provided by tyrosine 362 and asparagine 373. Residues alanine 376, 382-383, serine 401, and alanine 419 each bind acetyl-CoA; that span reads NY.

It in the N-terminal section; belongs to the N-acetylglucosamine-1-phosphate uridyltransferase family. The protein in the C-terminal section; belongs to the transferase hexapeptide repeat family. Homotrimer. It depends on Mg(2+) as a cofactor.

It is found in the cytoplasm. The enzyme catalyses alpha-D-glucosamine 1-phosphate + acetyl-CoA = N-acetyl-alpha-D-glucosamine 1-phosphate + CoA + H(+). It catalyses the reaction N-acetyl-alpha-D-glucosamine 1-phosphate + UTP + H(+) = UDP-N-acetyl-alpha-D-glucosamine + diphosphate. It functions in the pathway nucleotide-sugar biosynthesis; UDP-N-acetyl-alpha-D-glucosamine biosynthesis; N-acetyl-alpha-D-glucosamine 1-phosphate from alpha-D-glucosamine 6-phosphate (route II): step 2/2. It participates in nucleotide-sugar biosynthesis; UDP-N-acetyl-alpha-D-glucosamine biosynthesis; UDP-N-acetyl-alpha-D-glucosamine from N-acetyl-alpha-D-glucosamine 1-phosphate: step 1/1. Its pathway is bacterial outer membrane biogenesis; LPS lipid A biosynthesis. In terms of biological role, catalyzes the last two sequential reactions in the de novo biosynthetic pathway for UDP-N-acetylglucosamine (UDP-GlcNAc). The C-terminal domain catalyzes the transfer of acetyl group from acetyl coenzyme A to glucosamine-1-phosphate (GlcN-1-P) to produce N-acetylglucosamine-1-phosphate (GlcNAc-1-P), which is converted into UDP-GlcNAc by the transfer of uridine 5-monophosphate (from uridine 5-triphosphate), a reaction catalyzed by the N-terminal domain. This Burkholderia ambifaria (strain ATCC BAA-244 / DSM 16087 / CCUG 44356 / LMG 19182 / AMMD) (Burkholderia cepacia (strain AMMD)) protein is Bifunctional protein GlmU.